Here is a 626-residue protein sequence, read N- to C-terminus: Methanol dehydrogenase [cytochrome c] subunit 1 (626 aa).

The first 27 residues, 1–27, serve as a signal peptide directing secretion; the sequence is MSRFVTSVSALAMLALAPAALSSGAYA. An intrachain disulfide couples C130 to C131. 2 residues coordinate Ca(2+): E204 and N288. The Proton acceptor role is filled by D330. An intrachain disulfide couples C413 to C442.

This sequence belongs to the bacterial PQQ dehydrogenase family. In terms of assembly, heterotetramer composed of 2 alpha and 2 beta subunits. Pyrroloquinoline quinone is required as a cofactor. It depends on Ca(2+) as a cofactor.

The protein resides in the cell inner membrane. The catalysed reaction is 2 Fe(III)-[cytochrome cL] + a primary alcohol = 2 Fe(II)-[cytochrome cL] + an aldehyde + 2 H(+). Its function is as follows. Catalyzes the oxidation of primary alcohols including methanol. In Methylorubrum extorquens (strain ATCC 14718 / DSM 1338 / JCM 2805 / NCIMB 9133 / AM1) (Methylobacterium extorquens), this protein is Methanol dehydrogenase [cytochrome c] subunit 1 (moxF).